A 358-amino-acid chain; its full sequence is Nicotinate-nucleotide--dimethylbenzimidazole phosphoribosyltransferase (358 aa).

Catalysis depends on Glu-323, which acts as the Proton acceptor.

This sequence belongs to the CobT family.

The enzyme catalyses 5,6-dimethylbenzimidazole + nicotinate beta-D-ribonucleotide = alpha-ribazole 5'-phosphate + nicotinate + H(+). Its pathway is nucleoside biosynthesis; alpha-ribazole biosynthesis; alpha-ribazole from 5,6-dimethylbenzimidazole: step 1/2. Functionally, catalyzes the synthesis of alpha-ribazole-5'-phosphate from nicotinate mononucleotide (NAMN) and 5,6-dimethylbenzimidazole (DMB). The chain is Nicotinate-nucleotide--dimethylbenzimidazole phosphoribosyltransferase from Oleidesulfovibrio alaskensis (strain ATCC BAA-1058 / DSM 17464 / G20) (Desulfovibrio alaskensis).